The primary structure comprises 63 residues: Cysteine-rich peptide clone 2 (63 aa).

An N-terminal signal peptide occupies residues 1-23 (MHFSGVVLILLSMTLVNFVFVET). Cystine bridges form between Cys33-Cys53, Cys38-Cys58, and Cys42-Cys60.

As to expression, expressed by the venom gland.

Its subcellular location is the secreted. The chain is Cysteine-rich peptide clone 2 from Tityus costatus (Brazilian scorpion).